A 124-amino-acid polypeptide reads, in one-letter code: Glycine cleavage system H protein (124 aa).

Residues 19 to 101 (VATVGITDHA…ESGAWFFRMT (83 aa)) form the Lipoyl-binding domain. At Lys60 the chain carries N6-lipoyllysine.

It belongs to the GcvH family. In terms of assembly, the glycine cleavage system is composed of four proteins: P, T, L and H. The cofactor is (R)-lipoate.

Its function is as follows. The glycine cleavage system catalyzes the degradation of glycine. The H protein shuttles the methylamine group of glycine from the P protein to the T protein. This Acidiphilium cryptum (strain JF-5) protein is Glycine cleavage system H protein.